Reading from the N-terminus, the 483-residue chain is Altronate oxidoreductase (483 aa).

18 to 29 (IIQFGEGNFLRA) lines the NAD(+) pocket.

This sequence belongs to the mannitol dehydrogenase family. UxaB subfamily.

It catalyses the reaction D-altronate + NAD(+) = keto-D-tagaturonate + NADH + H(+). Its pathway is carbohydrate metabolism; pentose and glucuronate interconversion. The sequence is that of Altronate oxidoreductase from Klebsiella pneumoniae subsp. pneumoniae (strain ATCC 700721 / MGH 78578).